The sequence spans 207 residues: Ribosomal RNA small subunit methyltransferase G (207 aa).

S-adenosyl-L-methionine is bound by residues glycine 77, phenylalanine 82, 100–102, and arginine 141; that span reads ERS.

The protein belongs to the methyltransferase superfamily. RNA methyltransferase RsmG family.

The protein localises to the cytoplasm. Functionally, specifically methylates the N7 position of a guanine in 16S rRNA. The protein is Ribosomal RNA small subunit methyltransferase G of Borrelia turicatae (strain 91E135).